Here is a 362-residue protein sequence, read N- to C-terminus: Probable dual-specificity RNA methyltransferase RlmN (362 aa).

The active-site Proton acceptor is glutamate 105. In terms of domain architecture, Radical SAM core spans 111 to 344; the sequence is HEYGNSICVT…VTIRREQGHD (234 aa). Cysteine 118 and cysteine 349 are oxidised to a cystine. The [4Fe-4S] cluster site is built by cysteine 125, cysteine 129, and cysteine 132. Residues 175–176, serine 207, 230–232, and asparagine 306 contribute to the S-adenosyl-L-methionine site; these read GE and SLH. Cysteine 349 acts as the S-methylcysteine intermediate in catalysis.

The protein belongs to the radical SAM superfamily. RlmN family. Requires [4Fe-4S] cluster as cofactor.

The protein localises to the cytoplasm. It catalyses the reaction adenosine(2503) in 23S rRNA + 2 reduced [2Fe-2S]-[ferredoxin] + 2 S-adenosyl-L-methionine = 2-methyladenosine(2503) in 23S rRNA + 5'-deoxyadenosine + L-methionine + 2 oxidized [2Fe-2S]-[ferredoxin] + S-adenosyl-L-homocysteine. The catalysed reaction is adenosine(37) in tRNA + 2 reduced [2Fe-2S]-[ferredoxin] + 2 S-adenosyl-L-methionine = 2-methyladenosine(37) in tRNA + 5'-deoxyadenosine + L-methionine + 2 oxidized [2Fe-2S]-[ferredoxin] + S-adenosyl-L-homocysteine. Its function is as follows. Specifically methylates position 2 of adenine 2503 in 23S rRNA and position 2 of adenine 37 in tRNAs. This is Probable dual-specificity RNA methyltransferase RlmN from Bacillus cereus (strain B4264).